Reading from the N-terminus, the 208-residue chain is Superoxide dismutase [Mn] 2 (208 aa).

4 residues coordinate Mn(2+): H28, H83, D165, and H169.

The protein belongs to the iron/manganese superoxide dismutase family. As to quaternary structure, homodimer. The cofactor is Mn(2+).

The enzyme catalyses 2 superoxide + 2 H(+) = H2O2 + O2. Its function is as follows. Destroys superoxide anion radicals which are normally produced within the cells and which are toxic to biological systems. The sequence is that of Superoxide dismutase [Mn] 2 (sodA2) from Bacillus cereus (strain ATCC 14579 / DSM 31 / CCUG 7414 / JCM 2152 / NBRC 15305 / NCIMB 9373 / NCTC 2599 / NRRL B-3711).